A 124-amino-acid chain; its full sequence is Small ribosomal subunit protein eS25 (124 aa).

The span at 1 to 22 (MPPKDSKQKKDAGKSKKDKDPV) shows a compositional bias: basic and acidic residues. The disordered stretch occupies residues 1–37 (MPPKDSKQKKDAGKSKKDKDPVNKSGGKAKKKKWSKG). The span at 27-37 (GKAKKKKWSKG) shows a compositional bias: basic residues.

Belongs to the eukaryotic ribosomal protein eS25 family. Component of the small ribosomal subunit.

Its subcellular location is the cytoplasm. Functionally, component of the small ribosomal subunit. The ribosome is a large ribonucleoprotein complex responsible for the synthesis of proteins in the cell. The polypeptide is Small ribosomal subunit protein eS25 (rps25) (Danio rerio (Zebrafish)).